We begin with the raw amino-acid sequence, 436 residues long: UPF0597 protein YhaM (436 aa).

This sequence belongs to the UPF0597 family.

The chain is UPF0597 protein YhaM from Salmonella newport (strain SL254).